Reading from the N-terminus, the 361-residue chain is Phospho-N-acetylmuramoyl-pentapeptide-transferase (361 aa).

10 consecutive transmembrane segments (helical) span residues 26–46 (AGGA…CIIE), 71–91 (TPTM…FLWA), 97–117 (FILW…CDDY), 134–154 (IFGQ…FPSN), 168–188 (GFFI…IVGS), 200–220 (GLAI…AYFA), 236–256 (GAGE…GFLW), 264–284 (IFMG…VSLF), 290–310 (VLVL…IQIF), and 338–358 (KVTV…FASL).

Belongs to the glycosyltransferase 4 family. MraY subfamily. The cofactor is Mg(2+).

It is found in the cell membrane. It catalyses the reaction UDP-N-acetyl-alpha-D-muramoyl-L-alanyl-gamma-D-glutamyl-meso-2,6-diaminopimeloyl-D-alanyl-D-alanine + di-trans,octa-cis-undecaprenyl phosphate = di-trans,octa-cis-undecaprenyl diphospho-N-acetyl-alpha-D-muramoyl-L-alanyl-D-glutamyl-meso-2,6-diaminopimeloyl-D-alanyl-D-alanine + UMP. It functions in the pathway cell wall biogenesis; peptidoglycan biosynthesis. Its function is as follows. Catalyzes the initial step of the lipid cycle reactions in the biosynthesis of the cell wall peptidoglycan: transfers peptidoglycan precursor phospho-MurNAc-pentapeptide from UDP-MurNAc-pentapeptide onto the lipid carrier undecaprenyl phosphate, yielding undecaprenyl-pyrophosphoryl-MurNAc-pentapeptide, known as lipid I. This Endomicrobium trichonymphae protein is Phospho-N-acetylmuramoyl-pentapeptide-transferase.